We begin with the raw amino-acid sequence, 988 residues long: Isoleucine--tRNA ligase (988 aa).

Residues 60–70 carry the 'HIGH' region motif; that stretch reads PYANGALHMGH. Position 570 (Glu570) interacts with L-isoleucyl-5'-AMP. The 'KMSKS' region signature appears at 611 to 615; that stretch reads KMSKS. Lys614 provides a ligand contact to ATP. The Zn(2+) site is built by Cys957, Cys960, Cys977, and Cys980.

The protein belongs to the class-I aminoacyl-tRNA synthetase family. IleS type 1 subfamily. As to quaternary structure, monomer. Zn(2+) is required as a cofactor.

The protein resides in the cytoplasm. It catalyses the reaction tRNA(Ile) + L-isoleucine + ATP = L-isoleucyl-tRNA(Ile) + AMP + diphosphate. In terms of biological role, catalyzes the attachment of isoleucine to tRNA(Ile). As IleRS can inadvertently accommodate and process structurally similar amino acids such as valine, to avoid such errors it has two additional distinct tRNA(Ile)-dependent editing activities. One activity is designated as 'pretransfer' editing and involves the hydrolysis of activated Val-AMP. The other activity is designated 'posttransfer' editing and involves deacylation of mischarged Val-tRNA(Ile). The polypeptide is Isoleucine--tRNA ligase (Synechocystis sp. (strain ATCC 27184 / PCC 6803 / Kazusa)).